The primary structure comprises 545 residues: High-molecular-weight cytochrome c (545 aa).

Residues 1 to 31 form the signal peptide; it reads MRNGRTLLRWAGVLAATAIIGVGGFWSQGTT. Heme c-binding residues include His-66, His-69, Cys-80, Cys-83, His-84, His-111, Cys-114, Cys-117, His-118, Cys-135, Cys-138, His-139, His-159, His-162, Cys-178, Cys-181, His-182, His-183, Cys-202, Cys-205, His-206, His-222, Cys-225, Cys-228, His-229, Cys-244, Cys-247, His-248, His-298, His-301, Cys-308, Cys-311, His-312, His-313, Cys-319, Cys-322, His-323, His-341, Cys-349, Cys-352, His-353, Cys-362, Cys-365, His-366, Cys-378, Cys-381, His-382, His-449, His-470, Cys-477, Cys-480, His-481, His-482, Cys-493, Cys-496, His-497, His-516, Cys-519, Cys-522, His-523, Cys-536, Cys-539, and His-540.

In terms of assembly, monomer. In terms of processing, binds 16 heme c groups per subunit. High-spin heme 15 has single axial histidine ligand and the other hemes are low-spin bis-histidinyl coordinated.

The protein localises to the periplasm. HMWC (high-molecular-weight cytochrome c), ORF2, ORF3, ORF4, ORF5 and ORF6 in the HMC operon form a transmembrane protein complex that allows electron flow from the periplasmic hydrogenase to the cytoplasmic enzymes that catalyze reduction of sulfates. The chain is High-molecular-weight cytochrome c (hmcA) from Nitratidesulfovibrio vulgaris (strain ATCC 29579 / DSM 644 / CCUG 34227 / NCIMB 8303 / VKM B-1760 / Hildenborough) (Desulfovibrio vulgaris).